Consider the following 289-residue polypeptide: tRNA dimethylallyltransferase (289 aa).

An ATP-binding site is contributed by 9–16; it reads GTTASGKT. 11–16 contributes to the substrate binding site; that stretch reads TASGKT. The interval 34–37 is interaction with substrate tRNA; sequence DSLC.

The protein belongs to the IPP transferase family. Monomer. Requires Mg(2+) as cofactor.

The enzyme catalyses adenosine(37) in tRNA + dimethylallyl diphosphate = N(6)-dimethylallyladenosine(37) in tRNA + diphosphate. In terms of biological role, catalyzes the transfer of a dimethylallyl group onto the adenine at position 37 in tRNAs that read codons beginning with uridine, leading to the formation of N6-(dimethylallyl)adenosine (i(6)A). This Campylobacter jejuni subsp. jejuni serotype O:23/36 (strain 81-176) protein is tRNA dimethylallyltransferase.